The chain runs to 622 residues: Iron transport multicopper oxidase fio1 (622 aa).

The first 22 residues, 1–22, serve as a signal peptide directing secretion; the sequence is MNKFFSFPILGLLLTCVRFVVA. Residues 23–553 lie on the Extracellular side of the membrane; the sequence is KERLFEWNVT…GEMPAGWTSK (531 aa). N-linked (GlcNAc...) asparagine glycans are attached at residues N30 and N79. Plastocyanin-like domains follow at residues 49-147 and 194-304; these read IGVN…FIIN and TGLF…LSYN. Cu cation-binding residues include H85 and H87. N-linked (GlcNAc...) asparagine glycosylation is found at N117 and N123. Residues H129 and H131 each contribute to the Cu cation site. Residues N198, N202, N234, N269, N296, N338, N360, and N376 are each glycosylated (N-linked (GlcNAc...) asparagine). A Plastocyanin-like 3 domain is found at 386-498; that stretch reads EPVTYGPYTN…SGLLATFIEA (113 aa). Residues H417, H420, H422, H480, C481, H482, and H486 each coordinate Cu cation. N-linked (GlcNAc...) asparagine glycosylation is present at N532. Residues 554-574 form a helical membrane-spanning segment; it reads AIGTMAACVISACIGMGSIIF. Topologically, residues 575–622 are cytoplasmic; it reads YGASIHPVPTEELDENDDLQEAALENAAMFLDTDKAVEKVVEGKDEIK.

The protein belongs to the multicopper oxidase family. Cu cation serves as cofactor.

Its subcellular location is the cell membrane. In terms of biological role, could be an iron transport multicopper oxidase, which is required for Fe(2+) high affinity uptake. May be required to oxidize Fe(2+) and release it from the transporter. Essential component of copper-dependent iron transport. In Schizosaccharomyces pombe (strain 972 / ATCC 24843) (Fission yeast), this protein is Iron transport multicopper oxidase fio1 (fio1).